Reading from the N-terminus, the 415-residue chain is Gamma-glutamyl phosphate reductase (415 aa).

It belongs to the gamma-glutamyl phosphate reductase family.

The protein resides in the cytoplasm. It catalyses the reaction L-glutamate 5-semialdehyde + phosphate + NADP(+) = L-glutamyl 5-phosphate + NADPH + H(+). It participates in amino-acid biosynthesis; L-proline biosynthesis; L-glutamate 5-semialdehyde from L-glutamate: step 2/2. In terms of biological role, catalyzes the NADPH-dependent reduction of L-glutamate 5-phosphate into L-glutamate 5-semialdehyde and phosphate. The product spontaneously undergoes cyclization to form 1-pyrroline-5-carboxylate. In Clostridium perfringens (strain ATCC 13124 / DSM 756 / JCM 1290 / NCIMB 6125 / NCTC 8237 / Type A), this protein is Gamma-glutamyl phosphate reductase.